Reading from the N-terminus, the 51-residue chain is Protein SspM (51 aa).

The protein belongs to the alpha/beta-type SASP family.

This Mycolicibacterium phlei (Mycobacterium phlei) protein is Protein SspM (sspM).